A 308-amino-acid polypeptide reads, in one-letter code: Homoserine kinase (308 aa).

85–95 (PLTRGLGSSAA) is a binding site for ATP.

It belongs to the GHMP kinase family. Homoserine kinase subfamily.

The protein resides in the cytoplasm. It carries out the reaction L-homoserine + ATP = O-phospho-L-homoserine + ADP + H(+). It functions in the pathway amino-acid biosynthesis; L-threonine biosynthesis; L-threonine from L-aspartate: step 4/5. In terms of biological role, catalyzes the ATP-dependent phosphorylation of L-homoserine to L-homoserine phosphate. The sequence is that of Homoserine kinase from Caldicellulosiruptor saccharolyticus (strain ATCC 43494 / DSM 8903 / Tp8T 6331).